We begin with the raw amino-acid sequence, 284 residues long: Small ribosomal subunit protein uS5z (284 aa).

A compositionally biased stretch (basic and acidic residues) spans 1–19 (MAERGGEGGAERGGDRGDF). The segment at 1–51 (MAERGGEGGAERGGDRGDFGRGFGGGRGGGRGRDRGPRGRGRRGGRASEET) is disordered. The segment covering 20–29 (GRGFGGGRGG) has biased composition (gly residues). Positions 95–158 (LKDEVMKIMP…ILAKLSVVPV (64 aa)) constitute an S5 DRBM domain.

The protein belongs to the universal ribosomal protein uS5 family.

The chain is Small ribosomal subunit protein uS5z (RPS2A) from Arabidopsis thaliana (Mouse-ear cress).